Here is a 254-residue protein sequence, read N- to C-terminus: Probable phosphatase TTE1963 (254 aa).

Residues H14, H16, H22, H47, E80, H108, H139, D200, and H202 each contribute to the Zn(2+) site.

Belongs to the PHP family. The cofactor is Zn(2+).

This is Probable phosphatase TTE1963 from Caldanaerobacter subterraneus subsp. tengcongensis (strain DSM 15242 / JCM 11007 / NBRC 100824 / MB4) (Thermoanaerobacter tengcongensis).